Consider the following 297-residue polypeptide: Ribosomal RNA small subunit methyltransferase H (297 aa).

Residues 36 to 38 (GGH), aspartate 56, leucine 90, aspartate 104, and histidine 111 each bind S-adenosyl-L-methionine.

This sequence belongs to the methyltransferase superfamily. RsmH family.

The protein localises to the cytoplasm. It catalyses the reaction cytidine(1402) in 16S rRNA + S-adenosyl-L-methionine = N(4)-methylcytidine(1402) in 16S rRNA + S-adenosyl-L-homocysteine + H(+). Its function is as follows. Specifically methylates the N4 position of cytidine in position 1402 (C1402) of 16S rRNA. The sequence is that of Ribosomal RNA small subunit methyltransferase H from Dictyoglomus thermophilum (strain ATCC 35947 / DSM 3960 / H-6-12).